We begin with the raw amino-acid sequence, 229 residues long: Transcriptional activator protein YukR (229 aa).

The HTH luxR-type domain occupies 157-222 (DTSGKGILSP…QAIRLGVELE (66 aa)). Residues 181–200 (YPEIALIAGITTRTVKHHMG) constitute a DNA-binding region (H-T-H motif).

It belongs to the autoinducer-regulated transcriptional regulatory protein family.

Its function is as follows. Probable transcriptional activator. Binds to an autoinducer molecule. This is Transcriptional activator protein YukR (yukR) from Yersinia ruckeri.